The following is a 954-amino-acid chain: Glycine dehydrogenase (decarboxylating) (954 aa).

Lys-704 is modified (N6-(pyridoxal phosphate)lysine).

It belongs to the GcvP family. The glycine cleavage system is composed of four proteins: P, T, L and H. It depends on pyridoxal 5'-phosphate as a cofactor.

The enzyme catalyses N(6)-[(R)-lipoyl]-L-lysyl-[glycine-cleavage complex H protein] + glycine + H(+) = N(6)-[(R)-S(8)-aminomethyldihydrolipoyl]-L-lysyl-[glycine-cleavage complex H protein] + CO2. The glycine cleavage system catalyzes the degradation of glycine. The P protein binds the alpha-amino group of glycine through its pyridoxal phosphate cofactor; CO(2) is released and the remaining methylamine moiety is then transferred to the lipoamide cofactor of the H protein. The protein is Glycine dehydrogenase (decarboxylating) of Vibrio parahaemolyticus serotype O3:K6 (strain RIMD 2210633).